Consider the following 287-residue polypeptide: Polyamine aminopropyltransferase (287 aa).

The region spanning Glu-5–Asn-238 is the PABS domain. Gln-33 is an S-methyl-5'-thioadenosine binding site. Positions 64 and 88 each coordinate spermidine. Residues Glu-108 and Asp-140–Gly-141 contribute to the S-methyl-5'-thioadenosine site. Asp-158 acts as the Proton acceptor in catalysis. Residue Asp-158–Asp-161 coordinates spermidine. Pro-165 contributes to the S-methyl-5'-thioadenosine binding site.

This sequence belongs to the spermidine/spermine synthase family. In terms of assembly, homodimer or homotetramer.

The protein resides in the cytoplasm. The catalysed reaction is S-adenosyl 3-(methylsulfanyl)propylamine + putrescine = S-methyl-5'-thioadenosine + spermidine + H(+). Its pathway is amine and polyamine biosynthesis; spermidine biosynthesis; spermidine from putrescine: step 1/1. Its function is as follows. Catalyzes the irreversible transfer of a propylamine group from the amino donor S-adenosylmethioninamine (decarboxy-AdoMet) to putrescine (1,4-diaminobutane) to yield spermidine. This Pectobacterium carotovorum subsp. carotovorum (strain PC1) protein is Polyamine aminopropyltransferase.